The chain runs to 142 residues: Large ribosomal subunit protein uL11 (142 aa).

Belongs to the universal ribosomal protein uL11 family. Part of the ribosomal stalk of the 50S ribosomal subunit. Interacts with L10 and the large rRNA to form the base of the stalk. L10 forms an elongated spine to which L12 dimers bind in a sequential fashion forming a multimeric L10(L12)X complex. One or more lysine residues are methylated.

In terms of biological role, forms part of the ribosomal stalk which helps the ribosome interact with GTP-bound translation factors. This Erwinia tasmaniensis (strain DSM 17950 / CFBP 7177 / CIP 109463 / NCPPB 4357 / Et1/99) protein is Large ribosomal subunit protein uL11.